A 122-amino-acid polypeptide reads, in one-letter code: Large ribosomal subunit protein eL18 (122 aa).

It belongs to the eukaryotic ribosomal protein eL18 family.

The chain is Large ribosomal subunit protein eL18 from Picrophilus torridus (strain ATCC 700027 / DSM 9790 / JCM 10055 / NBRC 100828 / KAW 2/3).